A 429-amino-acid chain; its full sequence is Ribosomal RNA small subunit methyltransferase B (429 aa).

Residues Cys-254–Lys-260, Asp-277, Asp-303, and Asp-322 contribute to the S-adenosyl-L-methionine site. Cys-375 serves as the catalytic Nucleophile.

It belongs to the class I-like SAM-binding methyltransferase superfamily. RsmB/NOP family.

Its subcellular location is the cytoplasm. The catalysed reaction is cytidine(967) in 16S rRNA + S-adenosyl-L-methionine = 5-methylcytidine(967) in 16S rRNA + S-adenosyl-L-homocysteine + H(+). Functionally, specifically methylates the cytosine at position 967 (m5C967) of 16S rRNA. This chain is Ribosomal RNA small subunit methyltransferase B, found in Photorhabdus laumondii subsp. laumondii (strain DSM 15139 / CIP 105565 / TT01) (Photorhabdus luminescens subsp. laumondii).